The sequence spans 432 residues: Adenylosuccinate synthetase (432 aa).

Residues 12–18 (GDEGKGK) and 40–42 (GHT) each bind GTP. The active-site Proton acceptor is Asp13. Positions 13 and 40 each coordinate Mg(2+). Residues 13 to 16 (DEGK), 38 to 41 (NAGH), Thr132, Arg146, Gln226, Thr241, and Arg305 contribute to the IMP site. His41 serves as the catalytic Proton donor. 301-307 (VVTGRKR) serves as a coordination point for substrate. Residues Arg307, 333-335 (KLD), and 415-417 (STS) each bind GTP.

This sequence belongs to the adenylosuccinate synthetase family. As to quaternary structure, homodimer. The cofactor is Mg(2+).

Its subcellular location is the cytoplasm. The enzyme catalyses IMP + L-aspartate + GTP = N(6)-(1,2-dicarboxyethyl)-AMP + GDP + phosphate + 2 H(+). It participates in purine metabolism; AMP biosynthesis via de novo pathway; AMP from IMP: step 1/2. Functionally, plays an important role in the de novo pathway of purine nucleotide biosynthesis. Catalyzes the first committed step in the biosynthesis of AMP from IMP. This chain is Adenylosuccinate synthetase, found in Mesorhizobium japonicum (strain LMG 29417 / CECT 9101 / MAFF 303099) (Mesorhizobium loti (strain MAFF 303099)).